We begin with the raw amino-acid sequence, 412 residues long: LL-diaminopimelate aminotransferase (412 aa).

Substrate-binding residues include tyrosine 15 and glycine 42. Pyridoxal 5'-phosphate is bound by residues tyrosine 72, 108–109, tyrosine 132, asparagine 187, tyrosine 218, and 246–248; these read SK and SFS. Substrate-binding residues include lysine 109, tyrosine 132, and asparagine 187. N6-(pyridoxal phosphate)lysine is present on lysine 249. Pyridoxal 5'-phosphate contacts are provided by arginine 257 and asparagine 292. 2 residues coordinate substrate: asparagine 292 and arginine 388.

The protein belongs to the class-I pyridoxal-phosphate-dependent aminotransferase family. LL-diaminopimelate aminotransferase subfamily. In terms of assembly, homodimer. Pyridoxal 5'-phosphate is required as a cofactor.

It catalyses the reaction (2S,6S)-2,6-diaminopimelate + 2-oxoglutarate = (S)-2,3,4,5-tetrahydrodipicolinate + L-glutamate + H2O + H(+). It participates in amino-acid biosynthesis; L-lysine biosynthesis via DAP pathway; LL-2,6-diaminopimelate from (S)-tetrahydrodipicolinate (aminotransferase route): step 1/1. Involved in the synthesis of meso-diaminopimelate (m-DAP or DL-DAP), required for both lysine and peptidoglycan biosynthesis. Catalyzes the direct conversion of tetrahydrodipicolinate to LL-diaminopimelate. The protein is LL-diaminopimelate aminotransferase of Synechocystis sp. (strain ATCC 27184 / PCC 6803 / Kazusa).